The primary structure comprises 149 residues: MHCPFCSATDTKVIDSRLVAEGHQVRRRRECTECHERFTTFEGAELVMPRVIKRDGSRQPFDEEKLQGGMLRAVEKRPVSMDEIEQALSKIKSTLRATGEREVPSEMVGNLMMEQLMSLDKVAYIRFASVYRAFEDVSEFGEAIAKLQK.

A zinc finger lies at 3–34 (CPFCSATDTKVIDSRLVAEGHQVRRRRECTEC). The region spanning 49-139 (PRVIKRDGSR…VYRAFEDVSE (91 aa)) is the ATP-cone domain.

Belongs to the NrdR family. It depends on Zn(2+) as a cofactor.

Functionally, negatively regulates transcription of bacterial ribonucleotide reductase nrd genes and operons by binding to NrdR-boxes. The polypeptide is Transcriptional repressor NrdR (Shewanella baltica (strain OS223)).